Reading from the N-terminus, the 380-residue chain is Histone deacetylase-like amidohydrolase (380 aa).

H144 acts as the Proton donor/acceptor in catalysis. Residues D181, H183, and D269 each coordinate Zn(2+).

It belongs to the histone deacetylase family. In terms of assembly, homotetramer; dimer of head-to-head dimers. The cofactor is Zn(2+).

Is inhibited by azobenzenes, stilbenes and arylazopyrazoles. Its function is as follows. Probable protein deacetylase that catalyzes deacetylation of acetylated lysine residues. In vitro, exhibits high activity against artificial HDAC (histone deacetylase) substrates containing acetylated and trifluoroacetylated lysine residues. Is not able to deacetylate acetylated polyamines. The chain is Histone deacetylase-like amidohydrolase from Pseudomonas aeruginosa (strain ATCC 15692 / DSM 22644 / CIP 104116 / JCM 14847 / LMG 12228 / 1C / PRS 101 / PAO1).